The primary structure comprises 300 residues: Ribosomal protein bS6--L-glutamate ligase (300 aa).

An ATP-grasp domain is found at 104–287 (MQLLARQGID…IAGKMIRWIE (184 aa)). Residues Lys-141, 178–179 (EY), Asp-187, and 211–213 (RSN) contribute to the ATP site. Mg(2+) contacts are provided by Asp-248, Glu-260, and Asn-262. Positions 248, 260, and 262 each coordinate Mn(2+).

Belongs to the RimK family. Mg(2+) serves as cofactor. It depends on Mn(2+) as a cofactor.

In terms of biological role, an L-glutamate ligase that catalyzes the ATP-dependent post-translational addition of glutamate residues to the C-terminus of ribosomal protein bS6 (RpsF). Is also able to catalyze the synthesis of poly-alpha-glutamate in vitro, via ATP hydrolysis from unprotected glutamate as substrate. The number of glutamate residues added to either RpsF or to poly-alpha-glutamate changes with pH. The protein is Ribosomal protein bS6--L-glutamate ligase of Shigella dysenteriae serotype 1 (strain Sd197).